Reading from the N-terminus, the 100-residue chain is Small ribosomal subunit protein uS14c (100 aa).

It belongs to the universal ribosomal protein uS14 family. In terms of assembly, part of the 30S ribosomal subunit.

Its subcellular location is the plastid. The protein localises to the chloroplast. Functionally, binds 16S rRNA, required for the assembly of 30S particles. The chain is Small ribosomal subunit protein uS14c from Cycas taitungensis (Prince sago).